A 276-amino-acid polypeptide reads, in one-letter code: Transmembrane protein 53 (276 aa).

The chain crosses the membrane as a helical span at residues leucine 170 to phenylalanine 190.

Belongs to the TMEM53 family. In terms of tissue distribution, expressed in liver (at protein level).

It localises to the nucleus outer membrane. In terms of biological role, negatively regulates bone morphogenetic protein (BMP) signaling in osteoblast lineage cells by blocking cytoplasm-nucleus translocation of phosphorylated SMAD1/5/9 proteins. The chain is Transmembrane protein 53 (Tmem53) from Mus musculus (Mouse).